The chain runs to 216 residues: Adenylate kinase (216 aa).

Residue 11–16 (GSGKGT) coordinates ATP. An NMP region spans residues 31–60 (ATGDLFRKAIERGDELGDTVKSYMERGELV). AMP is bound by residues T32, R37, 58–60 (ELV), 86–89 (GFPR), and Q93. An LID region spans residues 127–163 (GRWVCRSCQSPYQCGCAEVAEGKCSRCQGELYQRPDD). R128 is a binding site for ATP. Positions 131, 134, 150, and 153 each coordinate Zn(2+). Residues R160 and R171 each contribute to the AMP site. A199 serves as a coordination point for ATP.

Belongs to the adenylate kinase family. In terms of assembly, monomer.

The protein resides in the cytoplasm. It catalyses the reaction AMP + ATP = 2 ADP. The protein operates within purine metabolism; AMP biosynthesis via salvage pathway; AMP from ADP: step 1/1. In terms of biological role, catalyzes the reversible transfer of the terminal phosphate group between ATP and AMP. Plays an important role in cellular energy homeostasis and in adenine nucleotide metabolism. The polypeptide is Adenylate kinase (Dehalococcoides mccartyi (strain ATCC BAA-2266 / KCTC 15142 / 195) (Dehalococcoides ethenogenes (strain 195))).